Consider the following 185-residue polypeptide: MKCLYILSGHTDRIYSTIYDHERKRCISASMDTTIRIWDLENIRNNGECSYATNSASPCAKILGAMYTLRGHRALVGLLGLSDKFLVSASVDGSIRCWDANTYFLKHFFDHTQLNTITALHVSDEVLVSGSEGLLNIYDLNSGLLVRSDTLSGADNVWNVSFKDNTLVAAVERDKRNLLEILDFS.

3 WD repeats span residues 9 to 48, 71 to 108, and 111 to 148; these read GHTDRIYSTIYDHERKRCISASMDTTIRIWDLENIRNNGE, GHRALVGLLGLSDKFLVSASVDGSIRCWDANTYFLKHF, and HTQLNTITALHVSDEVLVSGSEGLLNIYDLNSGLLVRS.

May be involved in the modulation of rDNA transcription. The chain is Regulator of rDNA transcription protein 13 (RRT13) from Saccharomyces cerevisiae (strain ATCC 204508 / S288c) (Baker's yeast).